A 187-amino-acid chain; its full sequence is Adenylate kinase (187 aa).

10–15 lines the ATP pocket; sequence GSGKGT. The NMP stretch occupies residues 30–59; it reads STGDLLRSEVVAGTPLGLQAKQVMAQGDLV. AMP-binding positions include T31, R36, 57 to 59, 85 to 88, and Q92; these read DLV and GYPR. Residues 126-136 form an LID region; the sequence is GRAQAEGREDD. R127 contributes to the ATP binding site. AMP contacts are provided by R133 and R144. An ATP-binding site is contributed by G172.

This sequence belongs to the adenylate kinase family. In terms of assembly, monomer.

The protein resides in the cytoplasm. The enzyme catalyses AMP + ATP = 2 ADP. The protein operates within purine metabolism; AMP biosynthesis via salvage pathway; AMP from ADP: step 1/1. Functionally, catalyzes the reversible transfer of the terminal phosphate group between ATP and AMP. Plays an important role in cellular energy homeostasis and in adenine nucleotide metabolism. The polypeptide is Adenylate kinase (Xylella fastidiosa (strain M23)).